A 396-amino-acid polypeptide reads, in one-letter code: Flap endonuclease 1 (396 aa).

Residues 1–105 (MGIHGLTKLL…DQLAQRTERR (105 aa)) are N-domain. Aspartate 34 provides a ligand contact to Mg(2+). Position 71 (arginine 71) interacts with DNA. Residues aspartate 87, glutamate 159, glutamate 161, aspartate 180, and aspartate 182 each contribute to the Mg(2+) site. Positions 123-254 (AIEKYSKRSV…VRALQMIKKH (132 aa)) are I-domain. Glutamate 159 lines the DNA pocket. Positions 232 and 234 each coordinate DNA. Aspartate 234 is a Mg(2+) binding site. Positions 338–346 (NQGRLESFF) are interaction with PCNA. Residues 341–396 (RLESFFTSLPKPATADKAKPKEDDKKRKAGAAAGGKDAKGGAAAKKGKFGVGGGKK) are disordered. Residues 354–366 (TADKAKPKEDDKK) show a composition bias toward basic and acidic residues. Residues 370–384 (GAAAGGKDAKGGAAA) show a composition bias toward low complexity.

This sequence belongs to the XPG/RAD2 endonuclease family. FEN1 subfamily. Interacts with PCNA. Three molecules of FEN1 bind to one PCNA trimer with each molecule binding to one PCNA monomer. PCNA stimulates the nuclease activity without altering cleavage specificity. The cofactor is Mg(2+). In terms of processing, phosphorylated. Phosphorylation upon DNA damage induces relocalization to the nuclear plasma.

Its subcellular location is the nucleus. It is found in the nucleolus. The protein localises to the nucleoplasm. The protein resides in the mitochondrion. In terms of biological role, structure-specific nuclease with 5'-flap endonuclease and 5'-3' exonuclease activities involved in DNA replication and repair. During DNA replication, cleaves the 5'-overhanging flap structure that is generated by displacement synthesis when DNA polymerase encounters the 5'-end of a downstream Okazaki fragment. It enters the flap from the 5'-end and then tracks to cleave the flap base, leaving a nick for ligation. Also involved in the long patch base excision repair (LP-BER) pathway, by cleaving within the apurinic/apyrimidinic (AP) site-terminated flap. Acts as a genome stabilization factor that prevents flaps from equilibrating into structures that lead to duplications and deletions. Also possesses 5'-3' exonuclease activity on nicked or gapped double-stranded DNA, and exhibits RNase H activity. Also involved in replication and repair of rDNA and in repairing mitochondrial DNA. The chain is Flap endonuclease 1 from Chlamydomonas reinhardtii (Chlamydomonas smithii).